Here is a 215-residue protein sequence, read N- to C-terminus: Adenylyl-sulfate kinase (215 aa).

Position 46–53 (46–53) interacts with ATP; sequence GLSGAGKS. Serine 120 acts as the Phosphoserine intermediate in catalysis.

It belongs to the APS kinase family.

The enzyme catalyses adenosine 5'-phosphosulfate + ATP = 3'-phosphoadenylyl sulfate + ADP + H(+). Its pathway is sulfur metabolism; hydrogen sulfide biosynthesis; sulfite from sulfate: step 2/3. Catalyzes the synthesis of activated sulfate. The protein is Adenylyl-sulfate kinase (cysC) of Vibrio cholerae serotype O1 (strain ATCC 39315 / El Tor Inaba N16961).